Here is a 160-residue protein sequence, read N- to C-terminus: Putative antiporter subunit mnhE2 (160 aa).

3 consecutive transmembrane segments (helical) span residues 22 to 42 (SFQF…IYIL), 61 to 81 (FLGV…NYIL), and 102 to 122 (WAIT…VIRI).

It belongs to the CPA3 antiporters (TC 2.A.63) subunit E family. As to quaternary structure, may form a heterooligomeric complex that consists of seven subunits: mnhA2, mnhB2, mnhC2, mnhD2, mnhE2, mnhF2 and mnhG2.

It is found in the cell membrane. This chain is Putative antiporter subunit mnhE2 (mnhE2), found in Staphylococcus haemolyticus (strain JCSC1435).